The primary structure comprises 85 residues: Small ribosomal subunit protein uS17 (85 aa).

It belongs to the universal ribosomal protein uS17 family. Part of the 30S ribosomal subunit.

In terms of biological role, one of the primary rRNA binding proteins, it binds specifically to the 5'-end of 16S ribosomal RNA. The polypeptide is Small ribosomal subunit protein uS17 (Syntrophus aciditrophicus (strain SB)).